The following is a 1588-amino-acid chain: Pentafunctional AROM polypeptide (1588 aa).

Positions 1–392 (MVQLAKVPIL…YGDSAQFVSD (392 aa)) are 3-dehydroquinate synthase. Residues 43–45 (DTN), 78–81 (ETSK), 109–111 (GGV), and D114 each bind NAD(+). Residue R125 participates in 7-phospho-2-dehydro-3-deoxy-D-arabino-heptonate binding. Position 134–135 (134–135 (TS)) interacts with NAD(+). 7-phospho-2-dehydro-3-deoxy-D-arabino-heptonate-binding residues include D141 and K147. K156 contributes to the NAD(+) binding site. Position 157 (N157) interacts with 7-phospho-2-dehydro-3-deoxy-D-arabino-heptonate. NAD(+) contacts are provided by residues 174–177 (WLET) and N185. E189 lines the Zn(2+) pocket. Residues 189–192 (EVIK) and K258 each bind 7-phospho-2-dehydro-3-deoxy-D-arabino-heptonate. E268 (proton acceptor; for 3-dehydroquinate synthase activity) is an active-site residue. Residues 272–276 (RNLLN) and H279 each bind 7-phospho-2-dehydro-3-deoxy-D-arabino-heptonate. H279 is a binding site for Zn(2+). H283 serves as the catalytic Proton acceptor; for 3-dehydroquinate synthase activity. 2 residues coordinate 7-phospho-2-dehydro-3-deoxy-D-arabino-heptonate: H295 and K364. H295 contacts Zn(2+). The segment at 405–871 (VYPFKDIPAD…WDVLHSELGA (467 aa)) is EPSP synthase. C853 acts as the For EPSP synthase activity in catalysis. A shikimate kinase region spans residues 890 to 1080 (SVVIIGMRAA…IPSGRSAFVC (191 aa)). Residue 895 to 902 (GMRAAGKT) participates in ATP binding. Positions 1081–1293 (LTFDDLTEQT…AAPGQLTVAQ (213 aa)) are 3-dehydroquinase. Residue H1198 is the Proton acceptor; for 3-dehydroquinate dehydratase activity of the active site. Residue K1227 is the Schiff-base intermediate with substrate; for 3-dehydroquinate dehydratase activity of the active site. The tract at residues 1306–1588 (PKELFVVGKP…KAIFDAVTKE (283 aa)) is shikimate dehydrogenase.

This sequence in the N-terminal section; belongs to the sugar phosphate cyclases superfamily. Dehydroquinate synthase family. It in the 2nd section; belongs to the EPSP synthase family. The protein in the 3rd section; belongs to the shikimate kinase family. In the 4th section; belongs to the type-I 3-dehydroquinase family. This sequence in the C-terminal section; belongs to the shikimate dehydrogenase family. Homodimer. Zn(2+) is required as a cofactor.

It localises to the cytoplasm. It carries out the reaction 7-phospho-2-dehydro-3-deoxy-D-arabino-heptonate = 3-dehydroquinate + phosphate. It catalyses the reaction 3-dehydroquinate = 3-dehydroshikimate + H2O. The enzyme catalyses shikimate + NADP(+) = 3-dehydroshikimate + NADPH + H(+). The catalysed reaction is shikimate + ATP = 3-phosphoshikimate + ADP + H(+). It carries out the reaction 3-phosphoshikimate + phosphoenolpyruvate = 5-O-(1-carboxyvinyl)-3-phosphoshikimate + phosphate. It participates in metabolic intermediate biosynthesis; chorismate biosynthesis; chorismate from D-erythrose 4-phosphate and phosphoenolpyruvate: step 2/7. It functions in the pathway metabolic intermediate biosynthesis; chorismate biosynthesis; chorismate from D-erythrose 4-phosphate and phosphoenolpyruvate: step 3/7. The protein operates within metabolic intermediate biosynthesis; chorismate biosynthesis; chorismate from D-erythrose 4-phosphate and phosphoenolpyruvate: step 4/7. Its pathway is metabolic intermediate biosynthesis; chorismate biosynthesis; chorismate from D-erythrose 4-phosphate and phosphoenolpyruvate: step 5/7. It participates in metabolic intermediate biosynthesis; chorismate biosynthesis; chorismate from D-erythrose 4-phosphate and phosphoenolpyruvate: step 6/7. Functionally, the AROM polypeptide catalyzes 5 consecutive enzymatic reactions in prechorismate polyaromatic amino acid biosynthesis. In Saccharomyces cerevisiae (strain ATCC 204508 / S288c) (Baker's yeast), this protein is Pentafunctional AROM polypeptide.